The primary structure comprises 460 residues: Bifunctional protein GlmU (460 aa).

A pyrophosphorylase region spans residues 1–229; the sequence is MTNYAIILAA…FNESLGVNDR (229 aa). UDP-N-acetyl-alpha-D-glucosamine is bound by residues 8–11, Lys-22, Gln-72, and 77–78; these read LAAG and GT. Asp-102 serves as a coordination point for Mg(2+). UDP-N-acetyl-alpha-D-glucosamine contacts are provided by Gly-139, Glu-154, Asn-169, and Asn-227. A Mg(2+)-binding site is contributed by Asn-227. A linker region spans residues 230–250; that stretch reads VALATAETVMRQRITQKHMVN. The interval 251-460 is N-acetyltransferase; the sequence is GVTFQNPETV…RLAHHPSRSK (210 aa). UDP-N-acetyl-alpha-D-glucosamine-binding residues include Arg-332 and Lys-350. The active-site Proton acceptor is the His-362. Tyr-365 and Asn-376 together coordinate UDP-N-acetyl-alpha-D-glucosamine. Acetyl-CoA-binding positions include Ala-379, 385–386, Ser-404, Ala-422, and Arg-439; that span reads NY.

In the N-terminal section; belongs to the N-acetylglucosamine-1-phosphate uridyltransferase family. It in the C-terminal section; belongs to the transferase hexapeptide repeat family. In terms of assembly, homotrimer. Mg(2+) is required as a cofactor.

It localises to the cytoplasm. It catalyses the reaction alpha-D-glucosamine 1-phosphate + acetyl-CoA = N-acetyl-alpha-D-glucosamine 1-phosphate + CoA + H(+). It carries out the reaction N-acetyl-alpha-D-glucosamine 1-phosphate + UTP + H(+) = UDP-N-acetyl-alpha-D-glucosamine + diphosphate. It functions in the pathway nucleotide-sugar biosynthesis; UDP-N-acetyl-alpha-D-glucosamine biosynthesis; N-acetyl-alpha-D-glucosamine 1-phosphate from alpha-D-glucosamine 6-phosphate (route II): step 2/2. It participates in nucleotide-sugar biosynthesis; UDP-N-acetyl-alpha-D-glucosamine biosynthesis; UDP-N-acetyl-alpha-D-glucosamine from N-acetyl-alpha-D-glucosamine 1-phosphate: step 1/1. Its pathway is bacterial outer membrane biogenesis; LPS lipid A biosynthesis. Functionally, catalyzes the last two sequential reactions in the de novo biosynthetic pathway for UDP-N-acetylglucosamine (UDP-GlcNAc). The C-terminal domain catalyzes the transfer of acetyl group from acetyl coenzyme A to glucosamine-1-phosphate (GlcN-1-P) to produce N-acetylglucosamine-1-phosphate (GlcNAc-1-P), which is converted into UDP-GlcNAc by the transfer of uridine 5-monophosphate (from uridine 5-triphosphate), a reaction catalyzed by the N-terminal domain. In Streptococcus pyogenes serotype M18 (strain MGAS8232), this protein is Bifunctional protein GlmU.